The primary structure comprises 282 residues: Bifunctional protein FolD (282 aa).

NADP(+) is bound by residues 165–167 and S190; that span reads GRS.

This sequence belongs to the tetrahydrofolate dehydrogenase/cyclohydrolase family. Homodimer.

The catalysed reaction is (6R)-5,10-methylene-5,6,7,8-tetrahydrofolate + NADP(+) = (6R)-5,10-methenyltetrahydrofolate + NADPH. The enzyme catalyses (6R)-5,10-methenyltetrahydrofolate + H2O = (6R)-10-formyltetrahydrofolate + H(+). It functions in the pathway one-carbon metabolism; tetrahydrofolate interconversion. In terms of biological role, catalyzes the oxidation of 5,10-methylenetetrahydrofolate to 5,10-methenyltetrahydrofolate and then the hydrolysis of 5,10-methenyltetrahydrofolate to 10-formyltetrahydrofolate. The chain is Bifunctional protein FolD from Macrococcus caseolyticus (strain JCSC5402) (Macrococcoides caseolyticum).